The sequence spans 411 residues: Tyrosine--tRNA ligase (411 aa).

An L-tyrosine-binding site is contributed by Tyr34. The 'HIGH' region signature appears at 39 to 48 (CTATSLHIGS). Residues Tyr171 and Gln175 each contribute to the L-tyrosine site. A 'KMSKS' region motif is present at residues 231-235 (KMGKT). Lys234 is an ATP binding site. The 67-residue stretch at 345–411 (ITAFELFHEA…GKKRHILVKI (67 aa)) folds into the S4 RNA-binding domain.

It belongs to the class-I aminoacyl-tRNA synthetase family. TyrS type 1 subfamily. As to quaternary structure, homodimer.

It localises to the cytoplasm. The catalysed reaction is tRNA(Tyr) + L-tyrosine + ATP = L-tyrosyl-tRNA(Tyr) + AMP + diphosphate + H(+). In terms of biological role, catalyzes the attachment of tyrosine to tRNA(Tyr) in a two-step reaction: tyrosine is first activated by ATP to form Tyr-AMP and then transferred to the acceptor end of tRNA(Tyr). This chain is Tyrosine--tRNA ligase, found in Rickettsia bellii (strain RML369-C).